A 300-amino-acid polypeptide reads, in one-letter code: Taste receptor type 2 member 105 (300 aa).

Residues 1–7 (MLSAAEG) lie on the Extracellular side of the membrane. A helical transmembrane segment spans residues 8-28 (ILLSIATVEAGLGVLGNTFIA). Residues 29–43 (LVNCMDWAKNNKLSM) lie on the Cytoplasmic side of the membrane. A helical transmembrane segment spans residues 44–64 (TGFLLIGLATSRIFIVWLLTL). At 65-87 (DAYAKLFYPSKYFSSSLIEIISY) the chain is on the extracellular side. A helical transmembrane segment spans residues 88 to 108 (IWMTVNHLTVWFATSLSIFYF). The Cytoplasmic portion of the chain corresponds to 109–128 (LKIANFSDCVFLWLKRRTDK). Residues 129–149 (AFVFLLGCLLTSWVISFSFVV) form a helical membrane-spanning segment. Residues 150–181 (KVMKDGKVNHRNRTSEMYWEKRQFTINYVFLN) are Extracellular-facing. Asn-161 carries N-linked (GlcNAc...) asparagine glycosylation. The helical transmembrane segment at 182–202 (IGVISLFMMTLTACFLLIMSL) threads the bilayer. Over 203–233 (WRHSRQMQSGVSGFRDLNTEAHVKAIKFLIS) the chain is Cytoplasmic. Residues 234–254 (FIILFVLYFIGVSIEIICIFI) form a helical membrane-spanning segment. The Extracellular segment spans residues 255-259 (PENKL). A helical membrane pass occupies residues 260–280 (LFIFGFTTASIYPCCHSFILI). Over 281–300 (LSNSQLKQAFVKVLQGLKFF) the chain is Cytoplasmic.

It belongs to the G-protein coupled receptor T2R family. In terms of tissue distribution, expressed in subsets of taste receptor cells of the tongue and palate epithelium and exclusively in gustducin-positive cells. Expressed in gastric and duodenal tissues.

It is found in the membrane. Its function is as follows. Gustducin-coupled cycloheximide receptor implicated in the perception of bitter compounds in the oral cavity and the gastrointestinal tract. Signals through PLCB2 and the calcium-regulated cation channel TRPM5. This chain is Taste receptor type 2 member 105 (Tas2r105), found in Mus musculus (Mouse).